The primary structure comprises 695 residues: Probable rhamnogalacturonate lyase C (695 aa).

The signal sequence occupies residues 1-21; it reads MFLPSRKALAFLACLASHSVA. Asn-28, Asn-96, Asn-118, Asn-144, Asn-199, Asn-285, Asn-532, and Asn-638 each carry an N-linked (GlcNAc...) asparagine glycan.

The protein belongs to the polysaccharide lyase 4 family.

The protein resides in the secreted. It carries out the reaction Endotype eliminative cleavage of L-alpha-rhamnopyranosyl-(1-&gt;4)-alpha-D-galactopyranosyluronic acid bonds of rhamnogalacturonan I domains in ramified hairy regions of pectin leaving L-rhamnopyranose at the reducing end and 4-deoxy-4,5-unsaturated D-galactopyranosyluronic acid at the non-reducing end.. Its function is as follows. Pectinolytic enzymes consist of four classes of enzymes: pectin lyase, polygalacturonase, pectin methylesterase and rhamnogalacturonase. Degrades the rhamnogalacturonan I (RG-I) backbone of pectin. This Aspergillus oryzae (strain ATCC 42149 / RIB 40) (Yellow koji mold) protein is Probable rhamnogalacturonate lyase C (rglC).